A 317-amino-acid chain; its full sequence is Acetyl-coenzyme A carboxylase carboxyl transferase subunit alpha (317 aa).

In terms of domain architecture, CoA carboxyltransferase C-terminal spans 39 to 293 (RLQKKSNDLT…KAVLEKQLHE (255 aa)).

The protein belongs to the AccA family. In terms of assembly, acetyl-CoA carboxylase is a heterohexamer composed of biotin carboxyl carrier protein (AccB), biotin carboxylase (AccC) and two subunits each of ACCase subunit alpha (AccA) and ACCase subunit beta (AccD).

The protein localises to the cytoplasm. It carries out the reaction N(6)-carboxybiotinyl-L-lysyl-[protein] + acetyl-CoA = N(6)-biotinyl-L-lysyl-[protein] + malonyl-CoA. Its pathway is lipid metabolism; malonyl-CoA biosynthesis; malonyl-CoA from acetyl-CoA: step 1/1. In terms of biological role, component of the acetyl coenzyme A carboxylase (ACC) complex. First, biotin carboxylase catalyzes the carboxylation of biotin on its carrier protein (BCCP) and then the CO(2) group is transferred by the carboxyltransferase to acetyl-CoA to form malonyl-CoA. The polypeptide is Acetyl-coenzyme A carboxylase carboxyl transferase subunit alpha (Neisseria gonorrhoeae (strain NCCP11945)).